We begin with the raw amino-acid sequence, 263 residues long: Putative TATA-binding protein pB263R (263 aa).

The protein belongs to the asfivirus B263R family.

In terms of biological role, putative TATA-binding protein. This Ornithodoros (relapsing fever ticks) protein is Putative TATA-binding protein pB263R.